The sequence spans 309 residues: Methionyl-tRNA formyltransferase (309 aa).

107–110 contributes to the (6S)-5,6,7,8-tetrahydrofolate binding site; it reads SLLP.

It belongs to the Fmt family.

It catalyses the reaction L-methionyl-tRNA(fMet) + (6R)-10-formyltetrahydrofolate = N-formyl-L-methionyl-tRNA(fMet) + (6S)-5,6,7,8-tetrahydrofolate + H(+). Attaches a formyl group to the free amino group of methionyl-tRNA(fMet). The formyl group appears to play a dual role in the initiator identity of N-formylmethionyl-tRNA by promoting its recognition by IF2 and preventing the misappropriation of this tRNA by the elongation apparatus. In Borrelia duttonii (strain Ly), this protein is Methionyl-tRNA formyltransferase.